The following is a 130-amino-acid chain: Small ribosomal subunit protein uS8 (130 aa).

It belongs to the universal ribosomal protein uS8 family. In terms of assembly, part of the 30S ribosomal subunit.

One of the primary rRNA binding proteins, it binds directly to 16S rRNA central domain where it helps coordinate assembly of the platform of the 30S subunit. The sequence is that of Small ribosomal subunit protein uS8 from Methanocella arvoryzae (strain DSM 22066 / NBRC 105507 / MRE50).